The following is a 656-amino-acid chain: Nuclear elongation and deformation protein 1 (656 aa).

S99 and S103 each carry phosphoserine. Residues 99–118 show a composition bias toward polar residues; that stretch reads SPIVSPTTSPKQTPSINVTE. The interval 99–121 is disordered; that stretch reads SPIVSPTTSPKQTPSINVTEPQD. T106 carries the phosphothreonine modification. 3 positions are modified to phosphoserine: S107, S159, and S286. Disordered regions lie at residues 282–328 and 587–656; these read VYGH…VSES and SDEE…ENAV. A compositionally biased stretch (low complexity) spans 291-300; that stretch reads PSRTPASPKS. S318, S321, and S587 each carry phosphoserine. Positions 318 to 328 are enriched in polar residues; it reads SEQSLSPVSES. The span at 596-609 shows a compositional bias: low complexity; that stretch reads KSTSKSPKTPKNTK. Residues 640 to 656 are compositionally biased toward acidic residues; sequence FEGEEDEEGEEDVENAV.

The protein belongs to the lipin family. As to quaternary structure, interacts with dis3, pim1 and nup189.

May have a role in the maintenance of the nuclear envelope structure and in minichromosome stability. The chain is Nuclear elongation and deformation protein 1 (ned1) from Schizosaccharomyces pombe (strain 972 / ATCC 24843) (Fission yeast).